We begin with the raw amino-acid sequence, 438 residues long: Glutamine synthetase (438 aa).

Residues 14 to 98 (EEVEYVDIRF…VHCNVVEPDT (85 aa)) form the GS beta-grasp domain. Residues 106–438 (PRIALKAEAY…LAGDVFTKDQ (333 aa)) form the GS catalytic domain. The Mg(2+) site is built by glutamate 130 and glutamate 132. An ATP-binding site is contributed by aspartate 208. Mg(2+)-binding residues include glutamate 213 and glutamate 220. L-glutamate contacts are provided by residues 264-265 (NG) and glycine 265. Histidine 269 contacts Mg(2+). ATP contacts are provided by residues 271 to 273 (NMS) and serine 273. Positions 321, 327, and 339 each coordinate L-glutamate. Residues arginine 339, arginine 344, and lysine 352 each contribute to the ATP site. Residue glutamate 357 coordinates Mg(2+). Arginine 359 lines the L-glutamate pocket. The residue at position 397 (tyrosine 397) is an O-AMP-tyrosine.

This sequence belongs to the glutamine synthetase family. As to quaternary structure, oligomer of 12 subunits arranged in the form of two hexameric ring. Mg(2+) serves as cofactor.

The protein localises to the cytoplasm. The enzyme catalyses L-glutamate + NH4(+) + ATP = L-glutamine + ADP + phosphate + H(+). The activity of this enzyme could be controlled by adenylation under conditions of abundant glutamine. In terms of biological role, catalyzes the ATP-dependent biosynthesis of glutamine from glutamate and ammonia. The polypeptide is Glutamine synthetase (Rhodobacter capsulatus (Rhodopseudomonas capsulata)).